The primary structure comprises 313 residues: MQRIGVTDYTILGTVKGAELELVRFTHPFMGFDVPAILGDHVTRMPVPVPFTPRLPRPGRLCDRSEIRPGKPLTRLARTALICRALIRRWMARTSYSDSVNCHTQPISAIFDYKDLRFEPPSNRISPAGQTSVDRLLQLSQGQAVEGQSAVARLTGEKKNHPGAQYANRLSPRIANNHPATQQTLFELGSGAKERNAINVSYLTALGTPGFTLMLPARMLCGIVSDNNFTQKQLCPSPARCTRGPAEPAKRGPWLEPGLVIRKDGLRTGKLLSSLRGLCLTVLRFQPTVPCFCRLALSSSVAISSTGLVNFSR.

The signal sequence occupies residues 1–15 (MQRIGVTDYTILGTV). The active-site Acyl-ester intermediate is S190.

The protein belongs to the class-C beta-lactamase family.

It carries out the reaction a beta-lactam + H2O = a substituted beta-amino acid. Its function is as follows. Upon expression in E.coli enables the latter to utilize penicillin as a carbon source. The polypeptide is Beta-lactamase (penA) (Burkholderia multivorans (strain ATCC 17616 / 249)).